Reading from the N-terminus, the 582-residue chain is MESVKQRILAPGKEGLKNFAGKSLGQIYRVLEKKQDTGETIELTEDGKPLEVPERKAPLCDCTCFGLPRRYIIAIMSGLGFCISFGIRCNLGVAIVDMVNNSTIHRGGKVIKEKAKFNWDPETVGMIHGSFFWGYIITQIPGGYIASRLAANRVFGAAILLTSTLNMLIPSAARVHYGCVIFVRILQGLVEGVTYPACHGIWSKWAPPLERSRLATTSFCGSYAGAVIAMPLAGILVQYTGWSSVFYVYGSFGMVWYMFWLLVSYESPAKHPTITDEERRYIEESIGESANLLGAMEKFKTPWRKFFTSMPVYAIIVANFCRSWTFYLLLISQPAYFEEVFGFEISKVGMLSAVPHLVMTIIVPIGGQIADFLRSKQILSTTTVRKIMNCGGFGMEATLLLVVGYSHTRGVAISFLVLAVGFSGFAISGFNVNHLDIAPRYASILMGISNGVGTLSGMVCPIIVGAMTKNKSREEWQYVFLIAALVHYGGVIFYAIFASGEKQPWADPEETSEEKCGFIHEDELDEETGDITQNYINYGTTKSYGATTQANGGWPSGWEKKEEFVQGEVQDSHSYKDRVDYS.

Over 1-71 the chain is Cytoplasmic; sequence MESVKQRILA…CTCFGLPRRY (71 aa). Residues 72–92 form a helical membrane-spanning segment; sequence IIAIMSGLGFCISFGIRCNLG. Residues 93-125 are Vesicular-facing; sequence VAIVDMVNNSTIHRGGKVIKEKAKFNWDPETVG. 2 N-linked (GlcNAc...) asparagine glycosylation sites follow: Asn100 and Asn101. A helical transmembrane segment spans residues 126 to 146; the sequence is MIHGSFFWGYIITQIPGGYIA. At 147–148 the chain is on the cytoplasmic side; the sequence is SR. A helical transmembrane segment spans residues 149–169; the sequence is LAANRVFGAAILLTSTLNMLI. Residues 170-177 lie on the Vesicular side of the membrane; the sequence is PSAARVHY. A helical transmembrane segment spans residues 178–198; it reads GCVIFVRILQGLVEGVTYPAC. Topologically, residues 199-216 are cytoplasmic; it reads HGIWSKWAPPLERSRLAT. A helical transmembrane segment spans residues 217 to 237; it reads TSFCGSYAGAVIAMPLAGILV. Residues 238–244 lie on the Vesicular side of the membrane; that stretch reads QYTGWSS. A helical transmembrane segment spans residues 245–265; it reads VFYVYGSFGMVWYMFWLLVSY. Residues 266–310 lie on the Cytoplasmic side of the membrane; the sequence is ESPAKHPTITDEERRYIEESIGESANLLGAMEKFKTPWRKFFTSM. Residues 311–331 traverse the membrane as a helical segment; sequence PVYAIIVANFCRSWTFYLLLI. Over 332–349 the chain is Vesicular; that stretch reads SQPAYFEEVFGFEISKVG. The chain crosses the membrane as a helical span at residues 350–370; the sequence is MLSAVPHLVMTIIVPIGGQIA. The Cytoplasmic portion of the chain corresponds to 371–386; the sequence is DFLRSKQILSTTTVRK. The helical transmembrane segment at 387–407 threads the bilayer; the sequence is IMNCGGFGMEATLLLVVGYSH. Over 408 to 409 the chain is Vesicular; the sequence is TR. The chain crosses the membrane as a helical span at residues 410-430; that stretch reads GVAISFLVLAVGFSGFAISGF. Residues 431 to 443 lie on the Cytoplasmic side of the membrane; it reads NVNHLDIAPRYAS. The helical transmembrane segment at 444-464 threads the bilayer; it reads ILMGISNGVGTLSGMVCPIIV. The Vesicular segment spans residues 465-477; that stretch reads GAMTKNKSREEWQ. Asn470 carries an N-linked (GlcNAc...) asparagine glycan. The helical transmembrane segment at 478 to 498 threads the bilayer; it reads YVFLIAALVHYGGVIFYAIFA. Residues 499–582 are Cytoplasmic-facing; the sequence is SGEKQPWADP…HSYKDRVDYS (84 aa).

This sequence belongs to the major facilitator superfamily. Sodium/anion cotransporter family. VGLUT subfamily. In terms of tissue distribution, predominantly expressed in adult brain. Expressed in amygdala, caudate nucleus, cerebral cortex, frontal lobe, hippocampus, medulla, occipital lobe, putamen, spinal cord, substantia nigra, subthalamic nucleus, temporal lobe and thalamus.

The protein localises to the cytoplasmic vesicle. The protein resides in the secretory vesicle. Its subcellular location is the synaptic vesicle membrane. It is found in the synapse. It localises to the synaptosome. The protein localises to the cell membrane. It carries out the reaction L-glutamate(out) = L-glutamate(in). It catalyses the reaction 3 Na(+)(out) + phosphate(out) = 3 Na(+)(in) + phosphate(in). The catalysed reaction is phosphate(in) = phosphate(out). The enzyme catalyses K(+)(in) + H(+)(out) = K(+)(out) + H(+)(in). It carries out the reaction chloride(in) = chloride(out). Chloride channel activity is allosterically activated by lumenal H(+) and Cl(-) leading to synaptic vesicles acidification. The L-glutamate transport activity is allosterically activated by lumenal H(+) and Cl(-). The allosteric requirement for H(+) efficiently prevents non-vesicular efflux across the plasma membrane. The L-glutamate uniporter activity exhibits a biphasic dependence on chloride concentration. In terms of biological role, multifunctional transporter that transports L-glutamate as well as multiple ions such as chloride, proton, potassium, sodium and phosphate. At the synaptic vesicle membrane, mainly functions as a uniporter which transports preferentially L-glutamate but also, phosphate from the cytoplasm into synaptic vesicles at presynaptic nerve terminals of excitatory neural cells. The L-glutamate or phosphate uniporter activity is electrogenic and is driven by the proton electrochemical gradient, mainly by the electrical gradient established by the vacuolar H(+)-ATPase across the synaptic vesicle membrane. In addition, functions as a chloride channel that allows the chloride permeation through the synaptic vesicle membrane therefore affects the proton electrochemical gradient and promotes synaptic vesicles acidification. Moreover, functions as a vesicular K(+)/H(+) antiport allowing to maintain the electrical gradient and to decrease chemical gradient and therefore sustain vesicular glutamate uptake. The vesicular H(+)/H(+) antiport activity is electroneutral. At the plasma membrane, following exocytosis, functions as a symporter of Na(+) and phosphate from the extracellular space to the cytoplasm allowing synaptic phosphate homeostasis regulation. The symporter activity is driven by an inside negative membrane potential and is electrogenic. Also involved in the regulation of retinal hyaloid vessel regression during postnatal development. May also play a role in the endocrine glutamatergic system of other tissues such as pineal gland and pancreas. The polypeptide is Vesicular glutamate transporter 2 (Homo sapiens (Human)).